The following is a 1118-amino-acid chain: Collagenase ColG (1118 aa).

Positions 1–45 (MKKNILKILMDSYSKESKIQTVRRVTSVSLLAVYLTMNTSSLVLA) are cleaved as a signal peptide. Positions 46 to 110 (KPIENTNDTS…KSKSTLRSAS (65 aa)) are excised as a propeptide. The tract at residues 111-786 (IANTNSEKYD…QYDVVFHGVL (676 aa)) is S1 metalloprotease domain, degrades both FALGPA (furylacryloyl-Leu-Gly-Pro-Ala) and type I collagen. Positions 119–388 (YDFEYLNGLS…AMERITWDYD (270 aa)) are activator domain required for full activity on collagen. The segment at 389–670 (GIGSNGKKVD…IQELADKYQG (282 aa)) is catalytic subdomain. Residues 396-1118 (KVDHDKFLDD…SGNYELRVNK (723 aa)) are degrades soluble FALGPA peptide (furylacryloyl-Leu-Gly-Pro-Ala) but not type I collagen. Glu-498 provides a ligand contact to Ca(2+). His-523 lines the Zn(2+) pocket. Residue Glu-524 is part of the active site. His-527 serves as a coordination point for Zn(2+). Ca(2+)-binding residues include Ala-531, Val-535, and Gly-537. Position 555 (Glu-555) interacts with Zn(2+). Positions 679–790 (DYLKDHGYKK…VFHGVLTDNA (112 aa)) are helper subdomain. The interval 787–882 (TDNADISNNK…SFTIEIKNED (96 aa)) is S2 domain. Asn-795, Lys-796, Asp-823, Asp-825, Asp-864, Glu-890, Glu-892, Asn-894, Asp-913, Asp-918, Ala-920, Asp-921, Glu-1009, Glu-1011, Asn-1013, Asp-1014, Ser-1032, Asp-1037, Arg-1039, and Asp-1040 together coordinate Ca(2+). The PKD domain occupies 797–885 (APIAKVTGPS…IEIKNEDTTT (89 aa)). The S3a collagen-binding domain stretch occupies residues 886–1003 (PITKEMEPND…SYSLNIKGLG (118 aa)). Residues 1008–1118 (KEKENNDSSD…SGNYELRVNK (111 aa)) form an S3b collagen-binding domain region. The segment at 1102-1106 (LVYKY) is collagen-binding.

Belongs to the peptidase M9B family. Collagenase subfamily. The cofactor is Ca(2+). Zn(2+) serves as cofactor. Upon purification gives 67 kDa, 78 kDa, 82 kDa and 116 kDa (full-length) proteins all of which have the same N-terminus; only the longest form digests insoluble collagen. At least 2 in vivo isolated forms (C1b and C1c) are missing the second collagen-binding domain, ending on Lys-1006 and Lys-1018 respectively.

The protein resides in the secreted. The catalysed reaction is Digestion of native collagen in the triple helical region at Xaa-|-Gly bonds. With synthetic peptides, a preference is shown for Gly at P3 and P1', Pro and Ala at P2 and P2', and hydroxyproline, Ala or Arg at P3'.. Its activity is regulated as follows. Inhibited by 1-10-phenanthroline. Inhibited by peptidomimetic isoamyl-phosphonyl-Gly-Pro-Ala, which binds to Zn(2+). Inhibited by broad-spectrum zinc metalloprotease inhibitor batimastat. N-aryl mercaptoacetamide-based inhibitors have been isolated that act on clostridial collagenases with submicromolar affinity while having negligibile activity on human collagenases. In terms of biological role, clostridial collagenases are among the most efficient degraders of eukaryotic collagen known; saprophytes use collagen as a carbon source while pathogens additionally digest collagen to aid in host colonization. Has both tripeptidylcarboxypeptidase on Gly-X-Y and endopeptidase activities; the endopeptidase cuts within the triple helix region of collagen while tripeptidylcarboxypeptidase successively digests the exposed ends, thus clostridial collagenases can digest large sections of collagen. Active on soluble type I collagen, insoluble collagen, azocoll, soluble PZ-peptide (all collagenase substrates) and gelatin. The full-length protein has collagenase activity, while the in vivo derived C-terminally truncated shorter versions only act on gelatin. In vitro digestion of soluble calf skin collagen fibrils requires both ColG and ColH; ColG forms missing the second collagen-binding domain are also synergistic with ColH, although their overall efficiency is decreased. The activator domain (residues 119-388) and catalytic subdomain (389-670) open and close around substrate using a Gly-rich hinge (387-397), allowing digestion when the protein is closed. Binding of collagen requires Ca(2+) and is inhibited by EGTA; the collagen-binding domain (CBD, S3a plus S3b) specifically recognizes the triple-helical conformation made by 3 collagen protein chains in the triple-helical region. Isolated CBD (S3a plus S3b) binds collagen fibrils and sheets of many tissues. This Hathewaya histolytica (Clostridium histolyticum) protein is Collagenase ColG.